Here is a 131-residue protein sequence, read N- to C-terminus: L-aspartate semialdehyde sulfurtransferase iron-sulfur subunit (131 aa).

4Fe-4S ferredoxin-type domains are found at residues 73-102 (KVIKRDLEKCVHCGCCITQCPINVIYMDED) and 103-131 (YNVVFKEEDCVGCKNCLKACPFKAIEIFE). The [4Fe-4S] cluster site is built by cysteine 82, cysteine 85, cysteine 88, cysteine 92, cysteine 112, cysteine 115, cysteine 118, and cysteine 122.

May form a complex with MJ0100. It depends on [4Fe-4S] cluster as a cofactor.

Its pathway is amino-acid biosynthesis. Its function is as follows. Required for O-acetylhomoserine sulfhydrylase (OAHS)-independent homocysteine (Hcy) biosynthesis. Together with MJ0100, catalyzes the condensation of sulfide with aspartate semialdehyde to generate homocysteine. May be involved in the reduction of the disulfide formed in MJ0100. This is L-aspartate semialdehyde sulfurtransferase iron-sulfur subunit from Methanocaldococcus jannaschii (strain ATCC 43067 / DSM 2661 / JAL-1 / JCM 10045 / NBRC 100440) (Methanococcus jannaschii).